A 156-amino-acid chain; its full sequence is Arginine repressor (156 aa).

The protein belongs to the ArgR family.

The protein localises to the cytoplasm. The protein operates within amino-acid biosynthesis; L-arginine biosynthesis [regulation]. In terms of biological role, regulates arginine biosynthesis genes. In Shewanella sp. (strain ANA-3), this protein is Arginine repressor.